The sequence spans 246 residues: MVSLTKRCIAEFIGTFILVFFGAGSAAVTLMIASGGTSPNPFNIGIGLLGGLGDWVAIGLAFGFAIAASIYALGNISGCHINPAVTIGLWSVKKFPGREVVPYIIAQLLGAAFGSFIFLQCAGIGAATVGGLGATAPFPGISYWQAMLAEVVGTFLLMITIMGIAVDERAPKGFAGIIIGLTVAGIITTLGNISGSSLNPARTFGPYLNDMIFAGTNLWNYYPIYVIGPIVGAVLAALTYQYLTSE.

Residues 1 to 11 (MVSLTKRCIAE) lie on the Cytoplasmic side of the membrane. Residues 12–32 (FIGTFILVFFGAGSAAVTLMI) traverse the membrane as a helical segment. Residues 33–55 (ASGGTSPNPFNIGIGLLGGLGDW) are Extracellular-facing. Residues 56 to 76 (VAIGLAFGFAIAASIYALGNI) form a helical membrane-spanning segment. Residues 77 to 103 (SGCHINPAVTIGLWSVKKFPGREVVPY) lie on the Cytoplasmic side of the membrane. The NPA 1 signature appears at 82–84 (NPA). Residues 104 to 124 (IIAQLLGAAFGSFIFLQCAGI) traverse the membrane as a helical segment. Residues 125–145 (GAATVGGLGATAPFPGISYWQ) are Extracellular-facing. A helical transmembrane segment spans residues 146–166 (AMLAEVVGTFLLMITIMGIAV). The Cytoplasmic portion of the chain corresponds to 167–172 (DERAPK). The helical transmembrane segment at 173-193 (GFAGIIIGLTVAGIITTLGNI) threads the bilayer. Residues 194–217 (SGSSLNPARTFGPYLNDMIFAGTN) lie on the Extracellular side of the membrane. The NPA 2 motif lies at 199-201 (NPA). A helical membrane pass occupies residues 218–238 (LWNYYPIYVIGPIVGAVLAAL). At 239-246 (TYQYLTSE) the chain is on the cytoplasmic side.

This sequence belongs to the MIP/aquaporin (TC 1.A.8) family. As to quaternary structure, homotetramer.

Its subcellular location is the cell membrane. Channel that permits osmotically driven movement of water in both directions. It mediates rapid entry or exit of water in response to abrupt changes in osmolarity. Also exhibits a transient but reproducible increase in the initial glycerol flux. The protein is Aquaporin AqpM (aqpM) of Methanothermobacter marburgensis (strain ATCC BAA-927 / DSM 2133 / JCM 14651 / NBRC 100331 / OCM 82 / Marburg) (Methanobacterium thermoautotrophicum).